A 209-amino-acid chain; its full sequence is NADH-quinone oxidoreductase subunit C (209 aa).

Belongs to the complex I 30 kDa subunit family. NDH-1 is composed of 14 different subunits. Subunits NuoB, C, D, E, F, and G constitute the peripheral sector of the complex.

The protein resides in the cell inner membrane. It carries out the reaction a quinone + NADH + 5 H(+)(in) = a quinol + NAD(+) + 4 H(+)(out). Functionally, NDH-1 shuttles electrons from NADH, via FMN and iron-sulfur (Fe-S) centers, to quinones in the respiratory chain. The immediate electron acceptor for the enzyme in this species is believed to be ubiquinone. Couples the redox reaction to proton translocation (for every two electrons transferred, four hydrogen ions are translocated across the cytoplasmic membrane), and thus conserves the redox energy in a proton gradient. In Bordetella petrii (strain ATCC BAA-461 / DSM 12804 / CCUG 43448), this protein is NADH-quinone oxidoreductase subunit C.